Reading from the N-terminus, the 514-residue chain is Pentatricopeptide repeat-containing protein At4g26800 (514 aa).

PPR repeat units follow at residues Asp-122–Pro-156, Asp-157–Arg-191, Asp-192–Pro-226, Asn-227–Pro-261, Asn-262–Pro-296, Asn-297–Pro-331, Asn-332–Ala-366, Asn-367–Pro-401, Asn-402–Leu-436, Asp-437–Pro-471, and Asp-472–Pro-510.

The protein belongs to the PPR family. P subfamily.

In Arabidopsis thaliana (Mouse-ear cress), this protein is Pentatricopeptide repeat-containing protein At4g26800.